We begin with the raw amino-acid sequence, 356 residues long: Glycerol-1-phosphate dehydrogenase [NAD(P)+] (356 aa).

NAD(+) is bound by residues 103-107 (GRSID) and 125-128 (TAAS). Residue Asp130 coordinates substrate. Residue Ser134 coordinates NAD(+). Substrate is bound at residue Asp177. Zn(2+) is bound by residues Asp177 and His257. His261 is a substrate binding site. Residue His273 participates in Zn(2+) binding.

This sequence belongs to the glycerol-1-phosphate dehydrogenase family. Requires Zn(2+) as cofactor.

It is found in the cytoplasm. It carries out the reaction sn-glycerol 1-phosphate + NAD(+) = dihydroxyacetone phosphate + NADH + H(+). The enzyme catalyses sn-glycerol 1-phosphate + NADP(+) = dihydroxyacetone phosphate + NADPH + H(+). The protein operates within membrane lipid metabolism; glycerophospholipid metabolism. Functionally, catalyzes the NAD(P)H-dependent reduction of dihydroxyacetonephosphate (DHAP or glycerone phosphate) to glycerol 1-phosphate (G1P). The G1P thus generated is used as the glycerophosphate backbone of phospholipids in the cellular membranes of Archaea. The protein is Glycerol-1-phosphate dehydrogenase [NAD(P)+] of Methanosarcina mazei (strain ATCC BAA-159 / DSM 3647 / Goe1 / Go1 / JCM 11833 / OCM 88) (Methanosarcina frisia).